The following is a 1023-amino-acid chain: Solute carrier family 12 member 3 (1023 aa).

Topologically, residues 1–134 (MELPGDGVHL…EPPPEPPRFG (134 aa)) are cytoplasmic. The segment at 91–131 (DPEQDDFKPPMYEETAGERMGGGDSSEEEEEEHKEPPPEPP) is disordered. Residues 135–164 (WVQGVMIRCMLNIWGVILYLRLPWITAQAG) traverse the membrane as a discontinuously helical segment. Na(+) contacts are provided by Leu145 and Trp148. Residues 165 to 186 (IGLTWVIILLSSFITGITGLST) traverse the membrane as a helical segment. The Cytoplasmic segment spans residues 187–217 (SAIATNGKVKGGGTYFLISRSLGPELGGSIG). The helical transmembrane segment at 218-240 (LIFAFANAVAVAMHTVGFAETVT) threads the bilayer. The Extracellular portion of the chain corresponds to 241-252 (DLMRENGVVMVD). The next 2 helical transmembrane spans lie at 253–277 (PIND…AGME) and 278–300 (WESK…YIVG). The Extracellular segment spans residues 301 to 335 (TIIPASPQKQAKGFFSYKAEIFAANFVPGWRGKEG). The discontinuously helical transmembrane segment at 336–357 (SFFGMFSIFFPSATGILAGANI) threads the bilayer. Chloride contacts are provided by Gly350, Ile351, and Leu352. Residues 358–368 (SGDLKDPTVAI) lie on the Cytoplasmic side of the membrane. Residues 369-390 (PRGTLMAIFWTTISYLIISATI) form a helical membrane-spanning segment. Residues 391-452 (GACVVRDASG…YQSMSLVSAF (62 aa)) lie on the Extracellular side of the membrane. N-linked (GlcNAc...) asparagine glycosylation is found at Asn403 and Asn414. Intrachain disulfides connect Cys415-Cys420 and Cys429-Cys435. A glycan (N-linked (GlcNAc...) asparagine) is linked at Asn432. A helical membrane pass occupies residues 453-476 (APLISAGIFGATLSSALACLVSAP). Na(+) contacts are provided by Ala463, Ser466, and Ser467. The Cytoplasmic segment spans residues 477-506 (KVFQCLCKDQLYPLIGFFGKGYGKNAEPLR). The chain crosses the membrane as a helical span at residues 507 to 521 (AYLLTYVIAVCFVLI). Residues 522–526 (AELNT) lie on the Extracellular side of the membrane. Residues 527 to 543 (IAPIISNFFLCSYALIN) traverse the membrane as a helical segment. Residue Tyr539 participates in chloride binding. Over 544-566 (FSCFHASVTNSPGWRPSFRFYSK) the chain is Cytoplasmic. 2 helical membrane passes run 567–586 (WLSL…LTWW) and 587–598 (AALIAFGVVFFL). Over 599-1023 (LGYTLYKKPA…QENVLTFYCQ (425 aa)) the chain is Cytoplasmic. Residues 614-629 (SVQASSYSMALNQCVG) are scissor helix. The ATP site is built by Leu647, Arg654, Val676, Gly733, and Leu772.

The protein belongs to the SLC12A transporter family. As to quaternary structure, homodimer; adopts a domain-swap conformation at the scissor helices connecting the transmembrane domain and C-terminal domain. In terms of tissue distribution, expressed in urinary bladder, intestine, ovary, skeletal muscle, eye, brain, and kidney.

The protein resides in the cell membrane. It carries out the reaction chloride(out) + Na(+)(out) = chloride(in) + Na(+)(in). With respect to regulation, inhibited by thiazide-type diuretics including polythiazide, metolazone, cyclothiazide, hydrochlorothiazide and chlorthalidone. Thiazide drugs, specifically inhibit SLC12A3/NCC transporter activity by competing with chloride for binding. Functionally, electroneutral sodium and chloride ion cotransporter, with a coupling ratio 1 Na(+):1 Cl(-). Mediates sodium and chloride reabsorption. The sequence is that of Solute carrier family 12 member 3 (slc12a3) from Pseudopleuronectes americanus (Winter flounder).